We begin with the raw amino-acid sequence, 410 residues long: Putative nickel insertion protein (410 aa).

The protein belongs to the LarC family.

This chain is Putative nickel insertion protein, found in Cyanothece sp. (strain PCC 7425 / ATCC 29141).